We begin with the raw amino-acid sequence, 324 residues long: Dermonecrotic toxin Hl-PLD1 (324 aa).

The signal sequence occupies residues 1 to 35; the sequence is MAHCYYNSKRGCNRVMKTVALVVLISTVMVEESRG. The active site involves His50. 2 residues coordinate Mg(2+): Glu70 and Asp72. The active-site Nucleophile is His86. Intrachain disulfides connect Cys90/Cys96 and Cys92/Cys236. Asp130 contacts Mg(2+).

This sequence belongs to the arthropod phospholipase D family. Class II subfamily. Requires Mg(2+) as cofactor. In terms of tissue distribution, expressed by the venom gland.

It localises to the secreted. The enzyme catalyses an N-(acyl)-sphingosylphosphocholine = an N-(acyl)-sphingosyl-1,3-cyclic phosphate + choline. The catalysed reaction is an N-(acyl)-sphingosylphosphoethanolamine = an N-(acyl)-sphingosyl-1,3-cyclic phosphate + ethanolamine. It catalyses the reaction a 1-acyl-sn-glycero-3-phosphocholine = a 1-acyl-sn-glycero-2,3-cyclic phosphate + choline. It carries out the reaction a 1-acyl-sn-glycero-3-phosphoethanolamine = a 1-acyl-sn-glycero-2,3-cyclic phosphate + ethanolamine. Functionally, dermonecrotic toxins cleave the phosphodiester linkage between the phosphate and headgroup of certain phospholipids (sphingolipid and lysolipid substrates), forming an alcohol (often choline) and a cyclic phosphate. This toxin acts on sphingomyelin (SM) with a high activity. It may also act on ceramide phosphoethanolamine (CPE), lysophosphatidylcholine (LPC) and lysophosphatidylethanolamine (LPE), but not on lysophosphatidylserine (LPS), and lysophosphatidylglycerol (LPG). It acts by transphosphatidylation, releasing exclusively cyclic phosphate products as second products. In vivo, shows dermonecrotic activity when intradermally injected into rabbit skin and is lethal to mice. Induces increased vascular permeability, edema, inflammatory response, and platelet aggregation. Does not show hemolytic activity (at up to 50 ug). The protein is Dermonecrotic toxin Hl-PLD1 of Hemiscorpius lepturus (Scorpion).